Reading from the N-terminus, the 64-residue chain is Photosystem II reaction center protein J (64 aa).

A helical transmembrane segment spans residues 35 to 55 (LWLVATAGGIAVIFVLGIFFY).

It belongs to the PsbJ family. PSII is composed of 1 copy each of membrane proteins PsbA, PsbB, PsbC, PsbD, PsbE, PsbF, PsbH, PsbI, PsbJ, PsbK, PsbL, PsbM, PsbT, PsbX, PsbY, Psb30/Ycf12, peripheral proteins PsbO, CyanoQ (PsbQ), PsbU, PsbV and a large number of cofactors. It forms dimeric complexes.

Its subcellular location is the cellular thylakoid membrane. Functionally, one of the components of the core complex of photosystem II (PSII). PSII is a light-driven water:plastoquinone oxidoreductase that uses light energy to abstract electrons from H(2)O, generating O(2) and a proton gradient subsequently used for ATP formation. It consists of a core antenna complex that captures photons, and an electron transfer chain that converts photonic excitation into a charge separation. The polypeptide is Photosystem II reaction center protein J (Prochlorococcus marinus (strain MIT 9515)).